The chain runs to 892 residues: Alanine--tRNA ligase (892 aa).

Residues histidine 596, histidine 600, cysteine 700, and histidine 704 each contribute to the Zn(2+) site.

The protein belongs to the class-II aminoacyl-tRNA synthetase family. The cofactor is Zn(2+).

Its subcellular location is the cytoplasm. The enzyme catalyses tRNA(Ala) + L-alanine + ATP = L-alanyl-tRNA(Ala) + AMP + diphosphate. Functionally, catalyzes the attachment of alanine to tRNA(Ala) in a two-step reaction: alanine is first activated by ATP to form Ala-AMP and then transferred to the acceptor end of tRNA(Ala). Also edits incorrectly charged Ser-tRNA(Ala) and Gly-tRNA(Ala) via its editing domain. This is Alanine--tRNA ligase from Methanococcus maripaludis (strain C7 / ATCC BAA-1331).